Here is a 211-residue protein sequence, read N- to C-terminus: Imidazole glycerol phosphate synthase subunit HisH (211 aa).

In terms of domain architecture, Glutamine amidotransferase type-1 spans 3-211 (VIAVVDYEMG…VAQVREKIPA (209 aa)). Cys-81 serves as the catalytic Nucleophile. Catalysis depends on residues His-186 and Glu-188.

Heterodimer of HisH and HisF.

The protein localises to the cytoplasm. The enzyme catalyses 5-[(5-phospho-1-deoxy-D-ribulos-1-ylimino)methylamino]-1-(5-phospho-beta-D-ribosyl)imidazole-4-carboxamide + L-glutamine = D-erythro-1-(imidazol-4-yl)glycerol 3-phosphate + 5-amino-1-(5-phospho-beta-D-ribosyl)imidazole-4-carboxamide + L-glutamate + H(+). The catalysed reaction is L-glutamine + H2O = L-glutamate + NH4(+). It functions in the pathway amino-acid biosynthesis; L-histidine biosynthesis; L-histidine from 5-phospho-alpha-D-ribose 1-diphosphate: step 5/9. Functionally, IGPS catalyzes the conversion of PRFAR and glutamine to IGP, AICAR and glutamate. The HisH subunit catalyzes the hydrolysis of glutamine to glutamate and ammonia as part of the synthesis of IGP and AICAR. The resulting ammonia molecule is channeled to the active site of HisF. The polypeptide is Imidazole glycerol phosphate synthase subunit HisH (Nostoc punctiforme (strain ATCC 29133 / PCC 73102)).